A 241-amino-acid chain; its full sequence is Phosphoadenosine 5'-phosphosulfate reductase (241 aa).

The active-site Nucleophile; cysteine thiosulfonate intermediate is the C235.

Belongs to the PAPS reductase family. CysH subfamily.

Its subcellular location is the cytoplasm. The enzyme catalyses [thioredoxin]-disulfide + sulfite + adenosine 3',5'-bisphosphate + 2 H(+) = [thioredoxin]-dithiol + 3'-phosphoadenylyl sulfate. It participates in sulfur metabolism; hydrogen sulfide biosynthesis; sulfite from sulfate: step 3/3. Catalyzes the formation of sulfite from phosphoadenosine 5'-phosphosulfate (PAPS) using thioredoxin as an electron donor. The chain is Phosphoadenosine 5'-phosphosulfate reductase from Xanthomonas oryzae pv. oryzae (strain MAFF 311018).